Reading from the N-terminus, the 210-residue chain is MGQVFLLMPVLLVSCFLSQGAAMENQRLFNIAVNRVQHLHLMAQKMFNDFEGTLLPDERRQLNKIFLLDFCNSDSIVSPIDKLETQKSSVLKLLHISFRLIESWEYPSQTLTISNSLMVRNSNQISEKLSDLKVGINLLIKGSQDGVLSLDDNDSQQLPPYGNYYQNLGGDGNVRRNYELLACFKKDMHKVETYLTVAKCRKSLEANCTL.

The first 22 residues, 1-22 (MGQVFLLMPVLLVSCFLSQGAA), serve as a signal peptide directing secretion. Histidine 38 is a binding site for Zn(2+). Cysteine 71 and cysteine 183 are disulfide-bonded. Glutamate 192 serves as a coordination point for Zn(2+). Cysteine 200 and cysteine 208 are oxidised to a cystine.

The protein belongs to the somatotropin/prolactin family.

The protein localises to the secreted. Its function is as follows. Growth hormone plays an important role in growth control and is involved in the regulation of several anabolic processes. Implicated as an osmoregulatory substance important for seawater adaptation. The chain is Somatotropin (gh) from Salmo salar (Atlantic salmon).